The primary structure comprises 707 residues: D-(-)-3-hydroxybutyrate oligomer hydrolase (707 aa).

The signal sequence occupies residues 1-32 (MASVFKVRSASGHVPVVRTLAAMMAVTVVLTA). The active-site Charge relay system is the Ser321.

Belongs to the D-(-)-3-hydroxybutyrate oligomer hydrolase family.

It is found in the secreted. It carries out the reaction (3R)-hydroxybutanoate dimer + H2O = 2 (R)-3-hydroxybutanoate + H(+). It participates in lipid metabolism; butanoate metabolism. Its function is as follows. Participates in the degradation of poly-3-hydroxybutyrate (PHB). It works downstream of poly(3-hydroxybutyrate) depolymerase, hydrolyzing D(-)-3-hydroxybutyrate oligomers of various length (3HB-oligomers) into 3HB-monomers. The sequence is that of D-(-)-3-hydroxybutyrate oligomer hydrolase from Paraburkholderia xenovorans (strain LB400).